The primary structure comprises 147 residues: uncharacterized protein (147 aa).

The span at 72–81 (ARAKPASRAP) shows a compositional bias: low complexity. Positions 72–147 (ARAKPASRAP…QGAAGRRLSP (76 aa)) are disordered.

This is an uncharacterized protein from Homo sapiens (Human).